The primary structure comprises 259 residues: Proteasome subunit alpha (259 aa).

Residues 233–243 are compositionally biased toward low complexity; the sequence is PAAPAAASESA. A disordered region spans residues 233–259; that stretch reads PAAPAAASESAPEPKPDTETKPADPQD. Residues 244-259 are compositionally biased toward basic and acidic residues; sequence PEPKPDTETKPADPQD.

It belongs to the peptidase T1A family. In terms of assembly, the 20S proteasome core is composed of 14 alpha and 14 beta subunits that assemble into four stacked heptameric rings, resulting in a barrel-shaped structure. The two inner rings, each composed of seven catalytic beta subunits, are sandwiched by two outer rings, each composed of seven alpha subunits. The catalytic chamber with the active sites is on the inside of the barrel. Has a gated structure, the ends of the cylinder being occluded by the N-termini of the alpha-subunits. Is capped by the proteasome-associated ATPase, ARC.

The protein resides in the cytoplasm. It functions in the pathway protein degradation; proteasomal Pup-dependent pathway. With respect to regulation, the formation of the proteasomal ATPase ARC-20S proteasome complex, likely via the docking of the C-termini of ARC into the intersubunit pockets in the alpha-rings, may trigger opening of the gate for substrate entry. Interconversion between the open-gate and close-gate conformations leads to a dynamic regulation of the 20S proteasome proteolysis activity. In terms of biological role, component of the proteasome core, a large protease complex with broad specificity involved in protein degradation. The protein is Proteasome subunit alpha of Rhodococcus opacus (strain B4).